A 278-amino-acid chain; its full sequence is Undecaprenyl-diphosphatase (278 aa).

Helical transmembrane passes span Ala49–Trp69, His97–Asp117, Leu120–Ala140, Ala197–Val217, Gly226–Ile246, and Leu258–Met278.

Belongs to the UppP family.

It is found in the cell membrane. The catalysed reaction is di-trans,octa-cis-undecaprenyl diphosphate + H2O = di-trans,octa-cis-undecaprenyl phosphate + phosphate + H(+). In terms of biological role, catalyzes the dephosphorylation of undecaprenyl diphosphate (UPP). Confers resistance to bacitracin. This chain is Undecaprenyl-diphosphatase, found in Exiguobacterium sibiricum (strain DSM 17290 / CCUG 55495 / CIP 109462 / JCM 13490 / 255-15).